A 74-amino-acid chain; its full sequence is Conotoxin VnMEKL-0222 (74 aa).

The signal sequence occupies residues 1–19 (MEKLTILLLVAAVLMSTQA). Residues 20–46 (LIQEKRPKEKIKFLSKRKSIPESWWEG) constitute a propeptide that is removed on maturation. Disulfide bonds link C48–C62, C55–C66, and C61–C71.

The protein belongs to the conotoxin O2 superfamily. Expressed by the venom duct.

It localises to the secreted. The protein is Conotoxin VnMEKL-0222 of Conus ventricosus (Mediterranean cone).